A 247-amino-acid polypeptide reads, in one-letter code: Mannose-P-dolichol utilization defect 1 protein (247 aa).

Ala-2 is subject to N-acetylalanine. The PQ-loop 1 domain maps to 39 to 105; it reads KILLSKGLGL…NNFPFSSWGE (67 aa). A run of 7 helical transmembrane segments spans residues 46 to 66, 74 to 94, 103 to 123, 128 to 145, 151 to 171, 185 to 205, and 213 to 233; these read LGLG…FKIL, LSLQ…IYSI, WGEA…VLHY, VKGV…LALL, LAVV…GKLL, LSAI…FTSV, and MAGV…QVLF. In terms of domain architecture, PQ-loop 2 spans 159 to 216; sequence ASNVPAVVVGKLLQAATNYHNGHTGQLSAITVFMLFGGSLARIFTSVQETGDPLMAGV.

It belongs to the MPDU1 (TC 2.A.43.3) family.

The protein resides in the membrane. Its function is as follows. Required for normal utilization of mannose-dolichol phosphate (Dol-P-Man) in the synthesis of N-linked and O-linked oligosaccharides and GPI anchors. The polypeptide is Mannose-P-dolichol utilization defect 1 protein (MPDU1) (Cricetulus griseus (Chinese hamster)).